A 142-amino-acid chain; its full sequence is MARPPPLPGLVGRRSGRAVDRAIGWRLFLLLWHPALGAQARPPRRAPGGRWRSRRVFLLVRRTRAAAYAFAIRRGVVRVVGGGGQLRPAPGEAAGEAGVAGAGLEAWRHPSGPARTQLEGQEGAGGWLVVGFLLCLFLLMPP.

An N-terminal signal peptide occupies residues 1 to 40 (MARPPPLPGLVGRRSGRAVDRAIGWRLFLLLWHPALGAQA). Residues 41–123 (RPPRRAPGGR…ARTQLEGQEG (83 aa)) are Extracellular-facing. A helical transmembrane segment spans residues 124-140 (AGGWLVVGFLLCLFLLM). At 141 to 142 (PP) the chain is on the cytoplasmic side.

As to expression, widely expressed in the adult with highest levels in placenta and testis. Also expressed in a number of embryonic tissues at multiple embryonic stages.

The protein localises to the nucleus membrane. It localises to the mitochondrion membrane. Its subcellular location is the cytoplasm. The chain is Taurine up-regulated 1 protein from Mus musculus (Mouse).